The chain runs to 76 residues: Sec-independent protein translocase protein TatA (76 aa).

A helical transmembrane segment spans residues M1–G21. Positions M43 to A76 are disordered. Positions N64 to A76 are enriched in basic and acidic residues.

This sequence belongs to the TatA/E family. The Tat system comprises two distinct complexes: a TatABC complex, containing multiple copies of TatA, TatB and TatC subunits, and a separate TatA complex, containing only TatA subunits. Substrates initially bind to the TatABC complex, which probably triggers association of the separate TatA complex to form the active translocon.

The protein localises to the cell inner membrane. In terms of biological role, part of the twin-arginine translocation (Tat) system that transports large folded proteins containing a characteristic twin-arginine motif in their signal peptide across membranes. TatA could form the protein-conducting channel of the Tat system. This is Sec-independent protein translocase protein TatA from Burkholderia lata (strain ATCC 17760 / DSM 23089 / LMG 22485 / NCIMB 9086 / R18194 / 383).